Consider the following 539-residue polypeptide: Chaperone Ric-8A (539 aa).

The interval 506–539 (PMGVTSDGRLGPLDEAAQKMLQRQESSDLDSDSD) is disordered.

This sequence belongs to the synembryn family.

The protein localises to the cytoplasm. The protein resides in the cell cortex. Its function is as follows. Chaperone that specifically binds and folds nascent G alpha proteins prior to G protein heterotrimer formation, promoting their stability and activity: folds GNAI1, GNAO1, GNA13 and GNAQ. Does not fold G(s) G-alpha proteins GNAS nor GNAL. Also acts as a guanine nucleotide exchange factor (GEF) for G alpha proteins by stimulating exchange of bound GDP for free GTP. The protein is Chaperone Ric-8A (ric8a) of Xenopus laevis (African clawed frog).